Reading from the N-terminus, the 184-residue chain is Adenine phosphoribosyltransferase (184 aa).

It belongs to the purine/pyrimidine phosphoribosyltransferase family. In terms of assembly, homodimer.

The protein resides in the cytoplasm. The catalysed reaction is AMP + diphosphate = 5-phospho-alpha-D-ribose 1-diphosphate + adenine. The protein operates within purine metabolism; AMP biosynthesis via salvage pathway; AMP from adenine: step 1/1. In terms of biological role, catalyzes a salvage reaction resulting in the formation of AMP, that is energically less costly than de novo synthesis. The polypeptide is Adenine phosphoribosyltransferase (Shewanella putrefaciens (strain CN-32 / ATCC BAA-453)).